We begin with the raw amino-acid sequence, 101 residues long: Gamma-secretase subunit PEN-2 (101 aa).

At 1–17 the chain is on the cytoplasmic side; the sequence is MNLERIPNEEKLSLCRR. The segment at residues 18 to 36 is an intramembrane region (helical); sequence YYLGGFAFLPFLWLVNILW. Residues 37-57 lie on the Cytoplasmic side of the membrane; it reads FFKEAFLKPAYTEQPQIKSYV. Residues 58–78 form a helical membrane-spanning segment; that stretch reads KKSALGLLLWVAVLTTWITVF. Over 79–101 the chain is Lumenal; it reads QHFRAQWGEVGDYLSFTIPLGTA.

The protein belongs to the PEN-2 family. In terms of assembly, the functional gamma-secretase complex is composed of at least four polypeptides: a presenilin homodimer (psen1 or psen2), nicastrin (ncstn), aph1 (aph1a or aph1b) and psenen.

It is found in the endoplasmic reticulum membrane. Its subcellular location is the golgi apparatus. It localises to the golgi stack membrane. The protein localises to the cell membrane. The protein resides in the membrane. Essential subunit of the gamma-secretase complex, an endoprotease complex that catalyzes the intramembrane cleavage of integral membrane proteins such as Notch receptors and APP (amyloid-beta precursor protein). The gamma-secretase complex plays a role in Notch and Wnt signaling cascades and regulation of downstream processes via its role in processing key regulatory proteins. In Danio rerio (Zebrafish), this protein is Gamma-secretase subunit PEN-2 (psenen).